The following is a 197-amino-acid chain: Phospholipid hydroperoxide glutathione peroxidase (197 aa).

Residue Ser40 is modified to Phosphoserine. Sec73 is a catalytic residue. Sec73 is a non-standard amino acid (selenocysteine).

It belongs to the glutathione peroxidase family. As to quaternary structure, monomer. Has a tendency to form higher mass oligomers. Interacts with FUNDC1; this interaction promotes GPX4 recruitment into mitochondria through TOM/TIM complex where it is degraded by mitophagy. As to expression, expressed very intensively in the testis and weakly in lung, heart, and cerebellum.

The protein resides in the mitochondrion. Its subcellular location is the cytoplasm. The catalysed reaction is a hydroperoxy polyunsaturated fatty acid + 2 glutathione = a hydroxy polyunsaturated fatty acid + glutathione disulfide + H2O. The enzyme catalyses 2 glutathione + H2O2 = glutathione disulfide + 2 H2O. It carries out the reaction tert-butyl hydroperoxide + 2 glutathione = tert-butanol + glutathione disulfide + H2O. It catalyses the reaction cumene hydroperoxide + 2 glutathione = 2-phenylpropan-2-ol + glutathione disulfide + H2O. The catalysed reaction is (9S)-hydroperoxy-(10E,12Z)-octadecadienoate + 2 glutathione = (9S)-hydroxy-(10E,12Z)-octadecadienoate + glutathione disulfide + H2O. The enzyme catalyses (13S)-hydroperoxy-(9Z,11E)-octadecadienoate + 2 glutathione = (13S)-hydroxy-(9Z,11E)-octadecadienoate + glutathione disulfide + H2O. It carries out the reaction (5S)-hydroperoxy-(6E,8Z,11Z,14Z)-eicosatetraenoate + 2 glutathione = (5S)-hydroxy-(6E,8Z,11Z,14Z)-eicosatetraenoate + glutathione disulfide + H2O. It catalyses the reaction (12R)-hydroperoxy-(5Z,8Z,10E,14Z)-eicosatetraenoate + 2 glutathione = (12R)-hydroxy-(5Z,8Z,10E,14Z)-eicosatetraenoate + glutathione disulfide + H2O. The catalysed reaction is (12S)-hydroperoxy-(5Z,8Z,10E,14Z)-eicosatetraenoate + 2 glutathione = (12S)-hydroxy-(5Z,8Z,10E,14Z)-eicosatetraenoate + glutathione disulfide + H2O. The enzyme catalyses (15S)-hydroperoxy-(5Z,8Z,11Z,13E)-eicosatetraenoate + 2 glutathione = (15S)-hydroxy-(5Z,8Z,11Z,13E)-eicosatetraenoate + glutathione disulfide + H2O. It carries out the reaction (5S)-hydroperoxy-(6E,8Z,11Z,14Z,17Z)-eicosapentaenoate + 2 glutathione = (5S)-hydroxy-(6E,8Z,11Z,14Z,17Z)-eicosapentaenoate + glutathione disulfide + H2O. It catalyses the reaction (12S)-hydroperoxy-(5Z,8Z,10E,14Z,17Z)-eicosapentaenoate + 2 glutathione = (12S)-hydroxy-(5Z,8Z,10E,14Z,17Z)-eicosapentaenoate + glutathione disulfide + H2O. The catalysed reaction is (15S)-hydroperoxy-(5Z,8Z,11Z,13E,17Z)-eicosapentaenoate + 2 glutathione = (15S)-hydroxy-(5Z,8Z,11Z,13E,17Z)-eicosapentaenoate + glutathione disulfide + H2O. The enzyme catalyses (15S)-hydroperoxy-(11Z,13E)-eicosadienoate + 2 glutathione = (15S)-hydroxy-(11Z,13E)-eicosadienoate + glutathione disulfide + H2O. It carries out the reaction (17S)-hydroperoxy-(4Z,7Z,10Z,13Z,15E,19Z)-docosahexaenoate + 2 glutathione = (17S)-hydroxy-(4Z,7Z,10Z,13Z,15E,19Z)-docosahexaenoate + glutathione disulfide + H2O. It catalyses the reaction a hydroperoxy-1,2-diacyl-glycero-3-phosphocholine + 2 glutathione = a hydroxy-1,2-diacyl-glycero-3-phosphocholine + glutathione disulfide + H2O. In terms of biological role, essential antioxidant peroxidase that directly reduces phospholipid hydroperoxide even if they are incorporated in membranes and lipoproteins. Can also reduce fatty acid hydroperoxide, cholesterol hydroperoxide and thymine hydroperoxide. Plays a key role in protecting cells from oxidative damage by preventing membrane lipid peroxidation. Required to prevent cells from ferroptosis, a non-apoptotic cell death resulting from an iron-dependent accumulation of lipid reactive oxygen species. The presence of selenocysteine (Sec) versus Cys at the active site is essential for life: it provides resistance to overoxidation and prevents cells against ferroptosis. The presence of Sec at the active site is also essential for the survival of a specific type of parvalbumin-positive interneurons, thereby preventing against fatal epileptic seizures. May be required to protect cells from the toxicity of ingested lipid hydroperoxides. Required for normal sperm development and male fertility. Essential for maturation and survival of photoreceptor cells. Plays a role in a primary T-cell response to viral and parasitic infection by protecting T-cells from ferroptosis and by supporting T-cell expansion. Plays a role of glutathione peroxidase in platelets in the arachidonic acid metabolism. Reduces hydroperoxy ester lipids formed by a 15-lipoxygenase that may play a role as down-regulator of the cellular 15-lipoxygenase pathway. Can also reduce small soluble hydroperoxides such as H2O2, cumene hydroperoxide and tert-butyl hydroperoxide. The chain is Phospholipid hydroperoxide glutathione peroxidase from Macaca fuscata fuscata (Japanese macaque).